Here is a 62-residue protein sequence, read N- to C-terminus: Defensin BmKDfsin5 (62 aa).

Residues 1–24 (MKVIALFFLFAFIFCTLEVAIVEA) form the signal peptide. 3 disulfides stabilise this stretch: Cys28/Cys49, Cys35/Cys57, and Cys39/Cys59.

This sequence belongs to the invertebrate defensin family. Type 2 subfamily. As to expression, highly expressed in non-venom gland (hemolymph) and moderately expressed in venom gland.

Its subcellular location is the secreted. Functionally, antibacterial peptide active against Gram-positive bacteria (including S.aureus ATCC25923 (MIC=2.5 uM), M.luteus AB93113 (MIC=2.5 uM), and the antibiotic-resistant S.epidermidis PRSE P1389 (MIC=1.25 uM)), but not against Gram-negative bacteria (including E.coli and P.aeruginosa). Also has weak blocking activity on Kv1.1/KCNA1 (8.7% inhibition), Kv1.2/KCNA2 (10.2% inhibition), Kv1.3/KCNA3 (9.0% inhibition), KCa3.1/KCNN4/IK (9.1% inhibition), KCa2.3/KCNN3/SK3 (46.3% inhibition) and Kv11.1/KCNH2/ERG1 (16.9% inhibition) channels (tested at 1 uM). It inhibits potassium channel current by interacting with the pore region. This Olivierus martensii (Manchurian scorpion) protein is Defensin BmKDfsin5.